A 311-amino-acid chain; its full sequence is 3-dehydro-scyllo-inosose hydrolase (311 aa).

Residues E35, H37, D46, H117, and E173 each coordinate Zn(2+).

It belongs to the creatininase superfamily. In terms of assembly, homotrimer. It depends on Zn(2+) as a cofactor.

It catalyses the reaction 3-dehydro-scyllo-inosose + H2O = 5-dehydro-L-gluconate + H(+). It participates in polyol metabolism; myo-inositol metabolism. Its function is as follows. Catalyzes the ring-opening hydrolysis of 3-dehydro-scyllo-inosose (diketo-inositol) to 5-dehydro-L-gluconate, and thus probably functions in a myo-inositol degradation pathway together with IolG, IolM and IolO. This Thermotoga maritima (strain ATCC 43589 / DSM 3109 / JCM 10099 / NBRC 100826 / MSB8) protein is 3-dehydro-scyllo-inosose hydrolase.